A 372-amino-acid chain; its full sequence is Formylglycine-generating enzyme (372 aa).

An N-terminal signal peptide occupies residues 1–31 (MAAPAREPALRCCIRLARVFLLLVLACEVAG). An intrachain disulfide couples Cys48 to Cys50. Positions 61 to 80 (SSAAAQRYSREANAPGLTSG) are disordered. Glu128 serves as a coordination point for Ca(2+). The N-linked (GlcNAc...) asparagine glycan is linked to Asn139. Disulfide bonds link Cys216–Cys363 and Cys233–Cys344. 7 residues coordinate Ca(2+): Asn257, Ile258, Asp271, Phe273, Asn291, Gly294, and Glu298. 2 residues coordinate Cu(2+): Cys334 and Cys339. The tract at residues 339-358 (CYRYRCAARSQNTPDSSASN) is interaction with sulfatases.

Belongs to the sulfatase-modifying factor family. In terms of assembly, monomer, homodimer and heterodimer with SUMF2. Cu(2+) serves as cofactor. N-glycosylated. Contains high-mannose-type oligosaccharides.

It localises to the endoplasmic reticulum lumen. It carries out the reaction L-cysteinyl-[sulfatase] + 2 a thiol + O2 = an organic disulfide + 3-oxo-L-alanyl-[sulfatase] + hydrogen sulfide + H2O + H(+). It functions in the pathway protein modification; sulfatase oxidation. Its function is as follows. Oxidase that catalyzes the conversion of cysteine to 3-oxoalanine on target proteins, using molecular oxygen and an unidentified reducing agent. 3-oxoalanine modification, which is also named formylglycine (fGly), occurs in the maturation of arylsulfatases and some alkaline phosphatases that use the hydrated form of 3-oxoalanine as a catalytic nucleophile. Known substrates include GALNS, ARSA, STS and ARSE. In Mus musculus (Mouse), this protein is Formylglycine-generating enzyme.